Consider the following 247-residue polypeptide: Probable transcriptional regulatory protein DvMF_3201 (247 aa).

A disordered region spans residues 1-21 (MAGHSKWANIQHRKGRQDAKR).

It belongs to the TACO1 family.

The protein localises to the cytoplasm. The chain is Probable transcriptional regulatory protein DvMF_3201 from Nitratidesulfovibrio vulgaris (strain DSM 19637 / Miyazaki F) (Desulfovibrio vulgaris).